A 357-amino-acid chain; its full sequence is tRNA N6-adenosine threonylcarbamoyltransferase (357 aa).

The Fe cation site is built by H116 and H120. Residues 139–143, D172, G185, and N284 contribute to the substrate site; that span reads LVSGG. Fe cation is bound at residue D312.

The protein belongs to the KAE1 / TsaD family. It depends on Fe(2+) as a cofactor.

It localises to the cytoplasm. It catalyses the reaction L-threonylcarbamoyladenylate + adenosine(37) in tRNA = N(6)-L-threonylcarbamoyladenosine(37) in tRNA + AMP + H(+). Required for the formation of a threonylcarbamoyl group on adenosine at position 37 (t(6)A37) in tRNAs that read codons beginning with adenine. Is involved in the transfer of the threonylcarbamoyl moiety of threonylcarbamoyl-AMP (TC-AMP) to the N6 group of A37, together with TsaE and TsaB. TsaD likely plays a direct catalytic role in this reaction. In Synechococcus sp. (strain CC9605), this protein is tRNA N6-adenosine threonylcarbamoyltransferase.